The chain runs to 1409 residues: DNA-directed RNA polymerase subunit beta' (1409 aa).

Zn(2+) contacts are provided by C70, C72, C85, and C88. Mg(2+) is bound by residues D458, D460, and D462. Zn(2+) is bound by residues C813, C887, C894, and C897. The segment covering 1385–1403 (EAAELAGSTSDVSTTADAS) has biased composition (low complexity). Positions 1385–1409 (EAAELAGSTSDVSTTADASEGAASE) are disordered.

Belongs to the RNA polymerase beta' chain family. The RNAP catalytic core consists of 2 alpha, 1 beta, 1 beta' and 1 omega subunit. When a sigma factor is associated with the core the holoenzyme is formed, which can initiate transcription. Mg(2+) serves as cofactor. It depends on Zn(2+) as a cofactor.

It catalyses the reaction RNA(n) + a ribonucleoside 5'-triphosphate = RNA(n+1) + diphosphate. DNA-dependent RNA polymerase catalyzes the transcription of DNA into RNA using the four ribonucleoside triphosphates as substrates. The chain is DNA-directed RNA polymerase subunit beta' from Variovorax paradoxus (strain S110).